The following is a 168-amino-acid chain: T-cell surface glycoprotein CD3 delta chain (168 aa).

Positions methionine 1–proline 21 are cleaved as a signal peptide. Residues arginine 22–alanine 102 lie on the Extracellular side of the membrane. Cysteine 37 and cysteine 74 form a disulfide bridge. Residues asparagine 38 and asparagine 56 are each glycosylated (N-linked (GlcNAc...) asparagine). A helical transmembrane segment spans residues glycine 103–alanine 123. Over glycine 124–lysine 168 the chain is Cytoplasmic. In terms of domain architecture, ITAM spans aspartate 135 to lysine 163. 2 positions are modified to phosphotyrosine: tyrosine 146 and tyrosine 157.

The TCR-CD3 complex is composed of a CD3D/CD3E and a CD3G/CD3E heterodimers that preferentially associate with TCRalpha and TCRbeta, respectively, to form TCRalpha/CD3E/CD3G and TCRbeta/CD3G/CD3E trimers. In turn, the hexamer interacts with CD3Z homodimer to form the TCR-CD3 complex. Alternatively, TCRalpha and TCRbeta can be replaced by TCRgamma and TCRdelta. Interacts with coreceptors CD4 and CD8. Phosphorylated on Tyr residues after T-cell receptor triggering by LCK in association with CD4/CD8. In terms of tissue distribution, CD3D is mostly present on T-lymphocytes with its TCR-CD3 partners. Present also in fetal NK-cells.

It is found in the cell membrane. Its function is as follows. Part of the TCR-CD3 complex present on T-lymphocyte cell surface that plays an essential role in adaptive immune response. When antigen presenting cells (APCs) activate T-cell receptor (TCR), TCR-mediated signals are transmitted across the cell membrane by the CD3 chains CD3D, CD3E, CD3G and CD3Z. All CD3 chains contain immunoreceptor tyrosine-based activation motifs (ITAMs) in their cytoplasmic domain. Upon TCR engagement, these motifs become phosphorylated by Src family protein tyrosine kinases LCK and FYN, resulting in the activation of downstream signaling pathways. In addition of this role of signal transduction in T-cell activation, CD3D plays an essential role in thymocyte differentiation. Indeed, participates in correct intracellular TCR-CD3 complex assembly and surface expression. In absence of a functional TCR-CD3 complex, thymocytes are unable to differentiate properly. Interacts with CD4 and CD8 and thus serves to establish a functional link between the TCR and coreceptors CD4 and CD8, which is needed for activation and positive selection of CD4 or CD8 T-cells. The polypeptide is T-cell surface glycoprotein CD3 delta chain (CD3D) (Bos taurus (Bovine)).